Here is a 231-residue protein sequence, read N- to C-terminus: Cytidylate kinase (231 aa).

12-20 (GPSGAGKGT) is an ATP binding site.

It belongs to the cytidylate kinase family. Type 1 subfamily.

The protein localises to the cytoplasm. The catalysed reaction is CMP + ATP = CDP + ADP. It catalyses the reaction dCMP + ATP = dCDP + ADP. In Shewanella amazonensis (strain ATCC BAA-1098 / SB2B), this protein is Cytidylate kinase.